A 245-amino-acid polypeptide reads, in one-letter code: Demethylmenaquinone methyltransferase (245 aa).

Residues threonine 70, aspartate 90, and aspartate 118–cysteine 119 each bind S-adenosyl-L-methionine.

This sequence belongs to the class I-like SAM-binding methyltransferase superfamily. MenG/UbiE family.

It catalyses the reaction a 2-demethylmenaquinol + S-adenosyl-L-methionine = a menaquinol + S-adenosyl-L-homocysteine + H(+). It functions in the pathway quinol/quinone metabolism; menaquinone biosynthesis; menaquinol from 1,4-dihydroxy-2-naphthoate: step 2/2. Methyltransferase required for the conversion of demethylmenaquinol (DMKH2) to menaquinol (MKH2). The protein is Demethylmenaquinone methyltransferase of Bacteroides fragilis (strain ATCC 25285 / DSM 2151 / CCUG 4856 / JCM 11019 / LMG 10263 / NCTC 9343 / Onslow / VPI 2553 / EN-2).